The following is a 470-amino-acid chain: tRNA (guanine(37)-N(1))-methyltransferase (470 aa).

S-adenosyl-L-methionine contacts are provided by residues 304–305, 332–333, and Asn370; these read DL and DG.

It belongs to the class I-like SAM-binding methyltransferase superfamily. TRM5/TYW2 family. As to quaternary structure, monomer.

The protein resides in the mitochondrion matrix. Its subcellular location is the nucleus. The protein localises to the cytoplasm. The catalysed reaction is guanosine(37) in tRNA + S-adenosyl-L-methionine = N(1)-methylguanosine(37) in tRNA + S-adenosyl-L-homocysteine + H(+). Specifically methylates the N1 position of guanosine-37 in various cytoplasmic and mitochondrial tRNAs. Methylation is not dependent on the nature of the nucleoside 5' of the target nucleoside. This is the first step in the biosynthesis of wybutosine (yW), a modified base adjacent to the anticodon of tRNAs and required for accurate decoding. The protein is tRNA (guanine(37)-N(1))-methyltransferase of Theileria parva (East coast fever infection agent).